Here is a 364-residue protein sequence, read N- to C-terminus: Rhomboid domain-containing protein 2 (364 aa).

5 consecutive transmembrane segments (helical) span residues 11–31 (WCLCPEVPSATFFTALLSLLV), 63–83 (LVTYIFVYENPISLLCGAIII), 100–120 (CFFTVIFAIFSAIIFLSFEAV), 158–178 (FGMVVPSVLVPWLLLGASWLI), and 184–204 (LSNVCGLSIGLAYGLTYCYSI). 2 disordered regions span residues 242 to 282 (AQSR…KLAS) and 317 to 364 (SSVY…VPMP). 2 stretches are compositionally biased toward polar residues: residues 267-276 (HPVSQTQHAS) and 317-329 (SSVYPASAGTSLG).

It belongs to the peptidase S54 family.

It localises to the golgi apparatus. The protein resides in the cis-Golgi network membrane. In Homo sapiens (Human), this protein is Rhomboid domain-containing protein 2 (RHBDD2).